A 721-amino-acid chain; its full sequence is 1,4-alpha-glucan branching enzyme GlgB (721 aa).

Catalysis depends on Asp400, which acts as the Nucleophile. Glu453 functions as the Proton donor in the catalytic mechanism.

The protein belongs to the glycosyl hydrolase 13 family. GlgB subfamily. In terms of assembly, monomer.

It carries out the reaction Transfers a segment of a (1-&gt;4)-alpha-D-glucan chain to a primary hydroxy group in a similar glucan chain.. Its pathway is glycan biosynthesis; glycogen biosynthesis. Functionally, catalyzes the formation of the alpha-1,6-glucosidic linkages in glycogen by scission of a 1,4-alpha-linked oligosaccharide from growing alpha-1,4-glucan chains and the subsequent attachment of the oligosaccharide to the alpha-1,6 position. This chain is 1,4-alpha-glucan branching enzyme GlgB, found in Chlamydia abortus (strain DSM 27085 / S26/3) (Chlamydophila abortus).